Consider the following 125-residue polypeptide: Large ribosomal subunit protein bL12 (125 aa).

This sequence belongs to the bacterial ribosomal protein bL12 family. As to quaternary structure, homodimer. Part of the ribosomal stalk of the 50S ribosomal subunit. Forms a multimeric L10(L12)X complex, where L10 forms an elongated spine to which 2 to 4 L12 dimers bind in a sequential fashion. Binds GTP-bound translation factors.

Functionally, forms part of the ribosomal stalk which helps the ribosome interact with GTP-bound translation factors. Is thus essential for accurate translation. In Porphyromonas gingivalis (strain ATCC 33277 / DSM 20709 / CIP 103683 / JCM 12257 / NCTC 11834 / 2561), this protein is Large ribosomal subunit protein bL12.